Reading from the N-terminus, the 273-residue chain is 2,3,4,5-tetrahydropyridine-2,6-dicarboxylate N-succinyltransferase (273 aa).

It belongs to the transferase hexapeptide repeat family.

It localises to the cytoplasm. The catalysed reaction is (S)-2,3,4,5-tetrahydrodipicolinate + succinyl-CoA + H2O = (S)-2-succinylamino-6-oxoheptanedioate + CoA. The protein operates within amino-acid biosynthesis; L-lysine biosynthesis via DAP pathway; LL-2,6-diaminopimelate from (S)-tetrahydrodipicolinate (succinylase route): step 1/3. The sequence is that of 2,3,4,5-tetrahydropyridine-2,6-dicarboxylate N-succinyltransferase from Bordetella petrii (strain ATCC BAA-461 / DSM 12804 / CCUG 43448).